Here is a 65-residue protein sequence, read N- to C-terminus: Large ribosomal subunit protein bL35 (65 aa).

Positions 1 to 65 (MPKIKTNRAA…GRLDRMLPYL (65 aa)) are disordered. Basic residues predominate over residues 10-44 (AAKRFRKTASGKYKAGHANRSHILTKKATKRKRNL). The segment covering 50 to 65 (VRAEDAGRLDRMLPYL) has biased composition (basic and acidic residues).

It belongs to the bacterial ribosomal protein bL35 family.

This is Large ribosomal subunit protein bL35 from Xylella fastidiosa (strain M23).